Here is a 301-residue protein sequence, read N- to C-terminus: tRNA-cytidine(32) 2-sulfurtransferase (301 aa).

Residues Ser-55–Ser-60 carry the PP-loop motif motif. The [4Fe-4S] cluster site is built by Cys-130, Cys-133, and Cys-221.

This sequence belongs to the TtcA family. Homodimer. Requires Mg(2+) as cofactor. It depends on [4Fe-4S] cluster as a cofactor.

The protein localises to the cytoplasm. It carries out the reaction cytidine(32) in tRNA + S-sulfanyl-L-cysteinyl-[cysteine desulfurase] + AH2 + ATP = 2-thiocytidine(32) in tRNA + L-cysteinyl-[cysteine desulfurase] + A + AMP + diphosphate + H(+). It participates in tRNA modification. Its function is as follows. Catalyzes the ATP-dependent 2-thiolation of cytidine in position 32 of tRNA, to form 2-thiocytidine (s(2)C32). The sulfur atoms are provided by the cysteine/cysteine desulfurase (IscS) system. This Acinetobacter baylyi (strain ATCC 33305 / BD413 / ADP1) protein is tRNA-cytidine(32) 2-sulfurtransferase.